The chain runs to 257 residues: Imidazole glycerol phosphate synthase subunit HisF (257 aa).

Active-site residues include aspartate 11 and aspartate 130.

This sequence belongs to the HisA/HisF family. In terms of assembly, heterodimer of HisH and HisF.

Its subcellular location is the cytoplasm. The enzyme catalyses 5-[(5-phospho-1-deoxy-D-ribulos-1-ylimino)methylamino]-1-(5-phospho-beta-D-ribosyl)imidazole-4-carboxamide + L-glutamine = D-erythro-1-(imidazol-4-yl)glycerol 3-phosphate + 5-amino-1-(5-phospho-beta-D-ribosyl)imidazole-4-carboxamide + L-glutamate + H(+). It participates in amino-acid biosynthesis; L-histidine biosynthesis; L-histidine from 5-phospho-alpha-D-ribose 1-diphosphate: step 5/9. Its function is as follows. IGPS catalyzes the conversion of PRFAR and glutamine to IGP, AICAR and glutamate. The HisF subunit catalyzes the cyclization activity that produces IGP and AICAR from PRFAR using the ammonia provided by the HisH subunit. The protein is Imidazole glycerol phosphate synthase subunit HisF of Shewanella frigidimarina (strain NCIMB 400).